We begin with the raw amino-acid sequence, 124 residues long: Small ribosomal subunit protein uS12 (124 aa).

3-methylthioaspartic acid is present on Asp89.

The protein belongs to the universal ribosomal protein uS12 family. In terms of assembly, part of the 30S ribosomal subunit. Contacts proteins S8 and S17. May interact with IF1 in the 30S initiation complex.

Functionally, with S4 and S5 plays an important role in translational accuracy. Its function is as follows. Interacts with and stabilizes bases of the 16S rRNA that are involved in tRNA selection in the A site and with the mRNA backbone. Located at the interface of the 30S and 50S subunits, it traverses the body of the 30S subunit contacting proteins on the other side and probably holding the rRNA structure together. The combined cluster of proteins S8, S12 and S17 appears to hold together the shoulder and platform of the 30S subunit. The protein is Small ribosomal subunit protein uS12 of Shewanella sp. (strain ANA-3).